We begin with the raw amino-acid sequence, 207 residues long: Ribonuclease HII (207 aa).

The RNase H type-2 domain maps to E18 to K206. The a divalent metal cation site is built by D24, E25, and D115.

The protein belongs to the RNase HII family. Mn(2+) serves as cofactor. It depends on Mg(2+) as a cofactor.

The protein localises to the cytoplasm. It carries out the reaction Endonucleolytic cleavage to 5'-phosphomonoester.. In terms of biological role, endonuclease that specifically degrades the RNA of RNA-DNA hybrids. This chain is Ribonuclease HII, found in Hydrogenovibrio crunogenus (strain DSM 25203 / XCL-2) (Thiomicrospira crunogena).